The primary structure comprises 301 residues: Retinochrome (301 aa).

At 1–17 (MFGNPAMTGLHQFTMWE) the chain is on the extracellular side. Residues 18–43 (HYFTGSIYLVLGCVVFSLCGMCIIFL) traverse the membrane as a helical segment. The Cytoplasmic portion of the chain corresponds to 44-54 (ARQSPKPRRKY). Residues 55-76 (AILIHVLITAMAVNGGDPAHAS) traverse the membrane as a helical segment. Topologically, residues 77-94 (SSIVGRWLYGSVGCQLMG) are extracellular. A helical transmembrane segment spans residues 95 to 120 (FWGFFGGMSHIWMLFAFAMERYMAVC). Topologically, residues 121–132 (HREFYQQMPSVY) are cytoplasmic. Residues 133–153 (YSIIVGLMYTFGTFWATMPLL) traverse the membrane as a helical segment. Over 154–180 (GWASYGLEVHGTSCTINYSVSDESYQS) the chain is Extracellular. Asparagine 170 carries N-linked (GlcNAc...) asparagine glycosylation. Residues 181-208 (YVFFLAIFSFIFPMVSGWYAISKAWSGL) form a helical membrane-spanning segment. At 209–230 (SAIPDAEKEKDKDILSEEQLTA) the chain is on the cytoplasmic side. Residues 231–255 (LAGAFILISLISWSGFGYVAIYSAL) form a helical membrane-spanning segment. Residues 256-264 (THGGAQLSH) are Extracellular-facing. Residues 265-289 (LRGHVPPIMSKTGCALFPLLIFLLT) form a helical membrane-spanning segment. At lysine 275 the chain carries N6-(retinylidene)lysine. The Cytoplasmic portion of the chain corresponds to 290 to 301 (ARSLPKSDTKKP).

The protein belongs to the G-protein coupled receptor 1 family. Opsin subfamily. Mainly stored in myeloid bodies of the inner segments.

It is found in the membrane. Its function is as follows. Retinochrome is capable of acting as an effective catalyst in the light to convert various isomers of retinal into 11-cis, the form that is required by opsin to resynthesize rhodopsin. This Todarodes pacificus (Japanese flying squid) protein is Retinochrome.